We begin with the raw amino-acid sequence, 254 residues long: Insulin-like growth factor-binding protein 4 (254 aa).

The N-terminal stretch at 1 to 21 (MLPFGLVAALLLAAGPRPSLG) is a signal peptide. The region spanning 23 to 103 (EAIHCPPCSE…MHGQGVCTEL (81 aa)) is the IGFBP N-terminal domain. Disulfide bonds link cysteine 27-cysteine 53, cysteine 30-cysteine 55, cysteine 38-cysteine 56, cysteine 44-cysteine 59, cysteine 67-cysteine 80, and cysteine 74-cysteine 100. An N-linked (GlcNAc...) asparagine glycan is attached at asparagine 125. Cystine bridges form between cysteine 131–cysteine 138, cysteine 170–cysteine 200, cysteine 211–cysteine 222, and cysteine 224–cysteine 245. Residues 167–245 (QGSCQSELHR…GLEPKGELDC (79 aa)) enclose the Thyroglobulin type-1 domain. Position 251 is a phosphoserine (serine 251).

In terms of assembly, binds IGF2 more than IGF1.

It localises to the secreted. Its function is as follows. IGF-binding proteins prolong the half-life of the IGFs and have been shown to either inhibit or stimulate the growth promoting effects of the IGFs on cell culture. They alter the interaction of IGFs with their cell surface receptors. This is Insulin-like growth factor-binding protein 4 (Igfbp4) from Mus musculus (Mouse).